Reading from the N-terminus, the 176-residue chain is ATP synthase subunit b (176 aa).

Residues 14 to 34 (STTLGTMIVVSGAFLILMLLL) traverse the membrane as a helical segment.

It belongs to the ATPase B chain family. As to quaternary structure, F-type ATPases have 2 components, F(1) - the catalytic core - and F(0) - the membrane proton channel. F(1) has five subunits: alpha(3), beta(3), gamma(1), delta(1), epsilon(1). F(0) has three main subunits: a(1), b(2) and c(10-14). The alpha and beta chains form an alternating ring which encloses part of the gamma chain. F(1) is attached to F(0) by a central stalk formed by the gamma and epsilon chains, while a peripheral stalk is formed by the delta and b chains.

It localises to the cell membrane. Functionally, f(1)F(0) ATP synthase produces ATP from ADP in the presence of a proton or sodium gradient. F-type ATPases consist of two structural domains, F(1) containing the extramembraneous catalytic core and F(0) containing the membrane proton channel, linked together by a central stalk and a peripheral stalk. During catalysis, ATP synthesis in the catalytic domain of F(1) is coupled via a rotary mechanism of the central stalk subunits to proton translocation. Component of the F(0) channel, it forms part of the peripheral stalk, linking F(1) to F(0). The polypeptide is ATP synthase subunit b (Enterococcus faecalis (strain ATCC 700802 / V583)).